Consider the following 247-residue polypeptide: Cementoblastoma-derived protein 1 (247 aa).

The span at methionine 1–cysteine 28 shows a compositional bias: polar residues. 2 disordered regions span residues methionine 1–proline 52 and glutamate 147–lysine 183.

In terms of processing, phosphorylated. Post-translationally, N-glycosylated. In terms of tissue distribution, expressed by cementoblasts, a subpopulation of periodontal ligament cells and cells located around vessels in periodontium (at protein level).

Its subcellular location is the cytoplasm. The protein resides in the nucleus. Its function is as follows. May play a role in development of the periodontium which surrounds and supports the teeth by promoting the differentiation of multi-potent cells from the periodontal ligament into cementoblasts to form the cementum. Binds hydroxyapatite and may promote the biomineralization of the cementum. Also promotes cell proliferation. The chain is Cementoblastoma-derived protein 1 from Homo sapiens (Human).